We begin with the raw amino-acid sequence, 1095 residues long: DNA polymerase delta catalytic subunit (1095 aa).

The span at 1–11 shows a compositional bias: basic residues; the sequence is MNRSGISKKRP. The interval 1–37 is disordered; it reads MNRSGISKKRPPPSNTPPPAGKHRATGDSTPSPAIGT. Zn(2+) contacts are provided by cysteine 1007, cysteine 1010, cysteine 1020, and cysteine 1023. The CysA-type zinc-finger motif lies at 1007 to 1023; the sequence is CVGCKVPISNGTLCASC. Residues cysteine 1052, cysteine 1055, cysteine 1065, and cysteine 1070 each contribute to the [4Fe-4S] cluster site. The CysB motif signature appears at 1052 to 1070; it reads CQECQGSLHQDVLCTSRDC.

Belongs to the DNA polymerase type-B family. In terms of assembly, heterodimer with subunits of 125 kDa and 50 kDa. The 125 kDa subunit contains the polymerase active site and most likely the active site for the 3'-5' exonuclease activity. It depends on [4Fe-4S] cluster as a cofactor.

The protein localises to the nucleus. The enzyme catalyses DNA(n) + a 2'-deoxyribonucleoside 5'-triphosphate = DNA(n+1) + diphosphate. Functionally, this polymerase possesses two enzymatic activities: DNA synthesis (polymerase) and an exonucleolytic activity that degrades single-stranded DNA in the 3'- to 5'-direction. This Arabidopsis thaliana (Mouse-ear cress) protein is DNA polymerase delta catalytic subunit (POLD1).